We begin with the raw amino-acid sequence, 189 residues long: Phosphoheptose isomerase (189 aa).

Residues 34–189 (LVAALKGGKK…CDLVEKGLFK (156 aa)) form the SIS domain. 49-51 (NGG) contributes to the substrate binding site. Zn(2+) is bound by residues His-58 and Glu-62. Residues Glu-62, 91 to 92 (ND), 117 to 119 (STS), Ser-122, and Gln-169 contribute to the substrate site. Residues Gln-169 and His-177 each contribute to the Zn(2+) site.

It belongs to the SIS family. GmhA subfamily. Homotetramer. It depends on Zn(2+) as a cofactor.

The protein resides in the cytoplasm. It catalyses the reaction 2 D-sedoheptulose 7-phosphate = D-glycero-alpha-D-manno-heptose 7-phosphate + D-glycero-beta-D-manno-heptose 7-phosphate. The protein operates within carbohydrate biosynthesis; D-glycero-D-manno-heptose 7-phosphate biosynthesis; D-glycero-alpha-D-manno-heptose 7-phosphate and D-glycero-beta-D-manno-heptose 7-phosphate from sedoheptulose 7-phosphate: step 1/1. Its function is as follows. Catalyzes the isomerization of sedoheptulose 7-phosphate in D-glycero-D-manno-heptose 7-phosphate. The protein is Phosphoheptose isomerase of Geobacter metallireducens (strain ATCC 53774 / DSM 7210 / GS-15).